The sequence spans 218 residues: Glutathione S-transferase Mu 4 (218 aa).

Residues 2-88 form the GST N-terminal domain; sequence SMTLGYWDIR…YIARKHNLCG (87 aa). Residues 7-8, 46-50, 59-60, and 72-73 contribute to the glutathione site; these read YW, WLNEK, NL, and QS. The 119-residue stretch at 90–208 folds into the GST C-terminal domain; the sequence is TEEEKIRVDI…KSSRFLPKPL (119 aa). Tyr116 is a substrate binding site.

It belongs to the GST superfamily. Mu family. Homodimer. In terms of tissue distribution, expressed in a wide variety of tissues.

It localises to the cytoplasm. It catalyses the reaction RX + glutathione = an S-substituted glutathione + a halide anion + H(+). The catalysed reaction is 1-chloro-2,4-dinitrobenzene + glutathione = 2,4-dinitrophenyl-S-glutathione + chloride + H(+). It carries out the reaction (13S,14S)-epoxy-(4Z,7Z,9E,11E,16Z,19Z)-docosahexaenoate + glutathione = (13R)-S-glutathionyl-(14S)-hydroxy-(4Z,7Z,9E,11E,16Z,19Z)-docosahexaenoate. The enzyme catalyses leukotriene C4 = leukotriene A4 + glutathione. Functionally, conjugation of reduced glutathione to a wide number of exogenous and endogenous hydrophobic electrophiles. Catalyzes the conjugation of leukotriene A4 with reduced glutathione (GSH) to form leukotriene C4. Can also catalyze the transfer of a glutathionyl group from glutathione (GSH) to 13(S),14(S)-epoxy-docosahexaenoic acid to form maresin conjugate in tissue regeneration 1 (MCTR1), a bioactive lipid mediator that possess potent anti-inflammatory and proresolving actions. The polypeptide is Glutathione S-transferase Mu 4 (GSTM4) (Homo sapiens (Human)).